The chain runs to 196 residues: Holliday junction branch migration complex subunit RuvA (196 aa).

Residues 1–65 are domain I; that stretch reads MIGNLSGTVD…ENTTQLYGFI (65 aa). The domain II stretch occupies residues 66-143; the sequence is NKEEQSCLRL…KLETNNNNFY (78 aa). Positions 144 to 147 are flexible linker; it reads PINE. The tract at residues 147 to 196 is domain III; that stretch reads EDAVSALINLGYEKTKVYDTIKKYKPNLDTKDIIRTALKELSNYEIDIMQ.

It belongs to the RuvA family. As to quaternary structure, homotetramer. Forms an RuvA(8)-RuvB(12)-Holliday junction (HJ) complex. HJ DNA is sandwiched between 2 RuvA tetramers; dsDNA enters through RuvA and exits via RuvB. An RuvB hexamer assembles on each DNA strand where it exits the tetramer. Each RuvB hexamer is contacted by two RuvA subunits (via domain III) on 2 adjacent RuvB subunits; this complex drives branch migration. In the full resolvosome a probable DNA-RuvA(4)-RuvB(12)-RuvC(2) complex forms which resolves the HJ.

It localises to the cytoplasm. Functionally, the RuvA-RuvB-RuvC complex processes Holliday junction (HJ) DNA during genetic recombination and DNA repair, while the RuvA-RuvB complex plays an important role in the rescue of blocked DNA replication forks via replication fork reversal (RFR). RuvA specifically binds to HJ cruciform DNA, conferring on it an open structure. The RuvB hexamer acts as an ATP-dependent pump, pulling dsDNA into and through the RuvAB complex. HJ branch migration allows RuvC to scan DNA until it finds its consensus sequence, where it cleaves and resolves the cruciform DNA. This Wolbachia sp. subsp. Brugia malayi (strain TRS) protein is Holliday junction branch migration complex subunit RuvA.